A 472-amino-acid chain; its full sequence is Pyruvate kinase (472 aa).

Residue Arg33 coordinates substrate. Residues Asn35, Ser37, and Asp67 each coordinate K(+). 35 to 38 contributes to the ATP binding site; it reads NFSH. Positions 74 and 155 each coordinate ATP. Position 220 (Glu220) interacts with Mg(2+). 3 residues coordinate substrate: Gly243, Asp244, and Thr276. Asp244 provides a ligand contact to Mg(2+).

Belongs to the pyruvate kinase family. In terms of assembly, homotetramer. It depends on Mg(2+) as a cofactor. Requires K(+) as cofactor.

The catalysed reaction is pyruvate + ATP = phosphoenolpyruvate + ADP + H(+). It functions in the pathway carbohydrate degradation; glycolysis; pyruvate from D-glyceraldehyde 3-phosphate: step 5/5. This chain is Pyruvate kinase (pyk), found in Mycobacterium intracellulare.